The sequence spans 262 residues: Phosphonates import ATP-binding protein PhnC (262 aa).

The ABC transporter domain maps to Ile5–Asn253. Gly37–Ser44 serves as a coordination point for ATP.

It belongs to the ABC transporter superfamily. Phosphonates importer (TC 3.A.1.9.1) family. In terms of assembly, the complex is composed of two ATP-binding proteins (PhnC), two transmembrane proteins (PhnE) and a solute-binding protein (PhnD).

The protein localises to the cell inner membrane. It carries out the reaction phosphonate(out) + ATP + H2O = phosphonate(in) + ADP + phosphate + H(+). Its function is as follows. Part of the ABC transporter complex PhnCDE involved in phosphonates import. Responsible for energy coupling to the transport system. The protein is Phosphonates import ATP-binding protein PhnC of Escherichia coli (strain UTI89 / UPEC).